A 316-amino-acid chain; its full sequence is Neutrophil-stimulating factor 1 (316 aa).

A signal peptide spans 1–21 (METSLPITVVFLIVLITGAQT). The segment at 126 to 316 (HGEMLERMTA…WFAVSWNDRG (191 aa)) is involved in interaction with human CD47. The N-linked (GlcNAc...) asparagine glycan is linked to asparagine 169.

Interacts with human CD4. Interacts with human CD47; the interaction results in inhibition of phagocytosis activity of host macrophages. In terms of tissue distribution, female salivary gland (at protein level). Saliva (at protein level). Some expression in ovary and midgut (at protein level).

It localises to the secreted. Functionally, activates host neutrophils; induces expression of IL1B and CXCL2 at the bite site. Promotes activation of human CD4(+) T-cells. Inhibits phagocytosis activity of host macrophages via the interaction with CD47 receptor on their surface. Suppresses expression of pro-inflammatory cytokines, such as IFN-gamma/IFNG, IL2, TNF-alpha/TNF, IL12B, IL8/CXCL8, IL6, in host white blood cells. Reduces host polymorphonuclear neutrophil chemotaxis induced by N-formylmethionine-leucylphenylalanine (fMLF). Reduces CD11b/ITGAM expression in fMLF-induced host polymorphonuclear neutrophils. (Microbial infection) Enhances early replication of Zika virus in the host. This chain is Neutrophil-stimulating factor 1, found in Aedes aegypti (Yellowfever mosquito).